The primary structure comprises 83 residues: MKLDIVLIMFVTFSTTLAQHDEREEWYPFRFGNGHVGCSNRLGMSENDFCRKLCNQDGKWRNSKCKEHYCYCGPQRFYRVIKL.

An N-terminal signal peptide occupies residues 1–18; it reads MKLDIVLIMFVTFSTTLA.

Contains 3 disulfide bonds. Expressed by the venom gland.

It is found in the secreted. Its function is as follows. Reversibly inhibits potassium channels. This is Putative potassium channel toxin Ts20 from Tityus serrulatus (Brazilian scorpion).